The following is a 132-amino-acid chain: D-ribose pyranase (132 aa).

The Proton donor role is filled by His20. Substrate is bound by residues Asp28, His99, and 121–123 (YSN).

The protein belongs to the RbsD / FucU family. RbsD subfamily. Homodecamer.

The protein resides in the cytoplasm. It carries out the reaction beta-D-ribopyranose = beta-D-ribofuranose. The protein operates within carbohydrate metabolism; D-ribose degradation; D-ribose 5-phosphate from beta-D-ribopyranose: step 1/2. Functionally, catalyzes the interconversion of beta-pyran and beta-furan forms of D-ribose. The protein is D-ribose pyranase of Streptococcus agalactiae serotype Ia (strain ATCC 27591 / A909 / CDC SS700).